A 346-amino-acid polypeptide reads, in one-letter code: F(420)H(2) dehydrogenase subunit F (346 aa).

4Fe-4S ferredoxin-type domains lie at 5–34 (IAEV…VKKA) and 46–76 (YEKG…ENEL). Residues C14, C17, C20, C24, C55, C58, C61, and C65 each contribute to the [4Fe-4S] cluster site.

The FPO complex is composed of at least 13 different subunits. The cofactor is [4Fe-4S] cluster. It depends on FAD as a cofactor.

Its subcellular location is the membrane. It is found in the cytoplasm. The catalysed reaction is methanophenazine + reduced coenzyme F420-(gamma-L-Glu)(n) = dihydromethanophenazine + oxidized coenzyme F420-(gamma-L-Glu)(n) + H(+). The enzyme catalyses reduced coenzyme F420-(gamma-L-Glu)(n) + 2 oxidized [2Fe-2S]-[ferredoxin] = oxidized coenzyme F420-(gamma-L-Glu)(n) + 2 reduced [2Fe-2S]-[ferredoxin] + 3 H(+). Component of the F(420)H(2) dehydrogenase (FPO complex) which is part of the energy-conserving F(420)H(2):heterodisulfide oxidoreductase system. The membrane-bound electron transfer system of the complex plays an important role in the metabolism of methylotrophic methanogens when the organisms grow on methanol or methylamines. Catalyzes the oxidation of methanophenazine to dihydromethanophenazine. It shuttles electrons from F(420)H(2), via FAD and iron-sulfur (Fe-S) centers, to methanophenazine (an electron carrier in the membrane). It couples the redox reaction to proton translocation (for every two electrons transferred, two hydrogen ions are translocated across the cytoplasmic membrane), and thus conserves the redox energy in a proton gradient. It also catalyzes the oxidation of F(420)H(2) with quinones such as 2,3-dimethyl-1,4-naphthoquinone, 2-methyl-1,4-naphthoquinone and tetramethyl-p-benzoquinone. Might have a dual function, acting as an electron input module when connected to the membrane integral Fpo complex, or as a soluble single subunit, being involved in the reoxydation of reduced ferredoxin in the cytoplasm. The polypeptide is F(420)H(2) dehydrogenase subunit F (fpoF) (Methanosarcina mazei (strain ATCC BAA-159 / DSM 3647 / Goe1 / Go1 / JCM 11833 / OCM 88) (Methanosarcina frisia)).